Consider the following 345-residue polypeptide: Phenylalanine--tRNA ligase alpha subunit (345 aa).

Mg(2+) is bound at residue E255.

It belongs to the class-II aminoacyl-tRNA synthetase family. Phe-tRNA synthetase alpha subunit type 1 subfamily. In terms of assembly, tetramer of two alpha and two beta subunits. Mg(2+) serves as cofactor.

It localises to the cytoplasm. The enzyme catalyses tRNA(Phe) + L-phenylalanine + ATP = L-phenylalanyl-tRNA(Phe) + AMP + diphosphate + H(+). The sequence is that of Phenylalanine--tRNA ligase alpha subunit from Lysinibacillus sphaericus (strain C3-41).